Reading from the N-terminus, the 208-residue chain is MRGIVTIDGPSASGKSSVARRVAAALGVPYLSSGLLYRAAAFLALRAGVDPGDEEGLLALLEGLGVRLLAQAEGNRVLADGEDLTPFLHTPEVDRVVSAVARLPGVRAWVNRRLKEVPPPFVAEGRDMGTAVFPEAAHKFYLTASPEVRAWRRARERPQAYEEVLRDLLRRDERDKAQSAPAPDALVLDTGGMTLDEVVAWVLAHIRR.

Residue 9-17 (GPSASGKSS) coordinates ATP.

It belongs to the cytidylate kinase family. Type 1 subfamily.

It is found in the cytoplasm. It carries out the reaction CMP + ATP = CDP + ADP. The catalysed reaction is dCMP + ATP = dCDP + ADP. The protein is Cytidylate kinase of Thermus thermophilus (strain ATCC BAA-163 / DSM 7039 / HB27).